Reading from the N-terminus, the 107-residue chain is U1-lycotoxin-Ls1b (107 aa).

Positions 1–20 (MMKVLVVVALLVTLISYSSS) are cleaved as a signal peptide. Residues 21–41 (EGIDDLEADELLSLMANEQTR) constitute a propeptide that is removed on maturation. 4 cysteine pairs are disulfide-bonded: C44-C59, C51-C68, C58-C86, and C70-C84.

The protein belongs to the neurotoxin 19 (CSTX) family. 04 (U1-Lctx) subfamily. As to expression, expressed by the venom gland.

It is found in the secreted. In Lycosa singoriensis (Wolf spider), this protein is U1-lycotoxin-Ls1b.